The sequence spans 640 residues: Pleckstrin homology-like domain family B member 3 (640 aa).

Disordered stretches follow at residues Met-1–Arg-100, Leu-162–Arg-189, Leu-241–Pro-262, Gly-387–Ser-412, and Arg-476–Pro-504. Residues Pro-76–Ser-90 show a composition bias toward low complexity. The stretch at Gln-104–Cys-327 forms a coiled coil. Over residues Gln-170 to Arg-189 the composition is skewed to basic and acidic residues. Residues Asp-454–Arg-481 adopt a coiled-coil conformation. Residues Thr-495 to Pro-504 are compositionally biased toward pro residues. Residues Gly-532–Asp-635 enclose the PH domain.

This chain is Pleckstrin homology-like domain family B member 3 (PHLDB3), found in Homo sapiens (Human).